The chain runs to 289 residues: Aquaporin-2 (289 aa).

Residues 1–36 (MSNESNDLEKNISHLDPTGVDNAYIPPEQPETKHSR) are disordered. The Cytoplasmic portion of the chain corresponds to 1-47 (MSNESNDLEKNISHLDPTGVDNAYIPPEQPETKHSRFNIDRDTLRNH). The chain crosses the membrane as a helical span at residues 48–68 (FIAAVGEFCGTFMFLWCAYVI). Over 69–90 (CNVANHDVALTTEPEGSHPGQL) the chain is Extracellular. A helical transmembrane segment spans residues 91–111 (IMIALGFGFSVMFSIWCFAGV). Residues 112–135 (SGGALNPAVSLSLCLARAISPARC) are Cytoplasmic-facing. Residues 117–119 (NPA) carry the NPA 1 motif. A helical transmembrane segment spans residues 136–156 (VVMWFPQIIAGMAAGGAASAM). Residues 157–175 (TPGKVLFTNALGLGCSRSR) lie on the Extracellular side of the membrane. The helical transmembrane segment at 176–196 (GLFLEMFGTAVLCLTVLMTAV) threads the bilayer. Residues 197–202 (EKRETN) lie on the Cytoplasmic side of the membrane. A helical membrane pass occupies residues 203-223 (FMAALPIGISLFMAHMALTGY). Residues 224 to 247 (TGTGVNPARSLGAAVAARYFPHYH) lie on the Extracellular side of the membrane. The NPA 2 signature appears at 229–231 (NPA). The chain crosses the membrane as a helical span at residues 248–268 (WIYWIGPLLGAFLAWSVWQLL). Residues 269 to 289 (QILDYTTYVNAEKAAGQKKED) are Cytoplasmic-facing.

The protein belongs to the MIP/aquaporin (TC 1.A.8) family.

Its subcellular location is the endoplasmic reticulum membrane. It localises to the cell membrane. Water channel required to facilitate the transport of water across membranes. Involved in freeze tolerance, osmotolerance and cell flocculation in liquid cultures. Is non-functional in most laboratory strains. The protein is Aquaporin-2 (AQY2) of Saccharomyces cerevisiae (Baker's yeast).